Here is a 101-residue protein sequence, read N- to C-terminus: Urease subunit beta (101 aa).

Belongs to the urease beta subunit family. In terms of assembly, heterotrimer of UreA (gamma), UreB (beta) and UreC (alpha) subunits. Three heterotrimers associate to form the active enzyme.

Its subcellular location is the cytoplasm. The catalysed reaction is urea + 2 H2O + H(+) = hydrogencarbonate + 2 NH4(+). It participates in nitrogen metabolism; urea degradation; CO(2) and NH(3) from urea (urease route): step 1/1. The chain is Urease subunit beta from Rhizobium etli (strain ATCC 51251 / DSM 11541 / JCM 21823 / NBRC 15573 / CFN 42).